A 38-amino-acid polypeptide reads, in one-letter code: Photosystem II reaction center protein L (38 aa).

A helical membrane pass occupies residues 17–37; sequence SLYWGLLLIFVLAILFSNYIF.

It belongs to the PsbL family. In terms of assembly, PSII is composed of 1 copy each of membrane proteins PsbA, PsbB, PsbC, PsbD, PsbE, PsbF, PsbH, PsbI, PsbJ, PsbK, PsbL, PsbM, PsbT, PsbX, PsbY, PsbZ, Psb30/Ycf12, at least 3 peripheral proteins of the oxygen-evolving complex and a large number of cofactors. It forms dimeric complexes.

It is found in the plastid. The protein localises to the chloroplast thylakoid membrane. One of the components of the core complex of photosystem II (PSII). PSII is a light-driven water:plastoquinone oxidoreductase that uses light energy to abstract electrons from H(2)O, generating O(2) and a proton gradient subsequently used for ATP formation. It consists of a core antenna complex that captures photons, and an electron transfer chain that converts photonic excitation into a charge separation. This subunit is found at the monomer-monomer interface and is required for correct PSII assembly and/or dimerization. This is Photosystem II reaction center protein L from Chlorokybus atmophyticus (Soil alga).